Consider the following 272-residue polypeptide: Orotidine 5'-phosphate decarboxylase (272 aa).

Residue Lys96 is the Proton donor of the active site.

This sequence belongs to the OMP decarboxylase family. Type 2 subfamily.

The catalysed reaction is orotidine 5'-phosphate + H(+) = UMP + CO2. It participates in pyrimidine metabolism; UMP biosynthesis via de novo pathway; UMP from orotate: step 2/2. This is Orotidine 5'-phosphate decarboxylase from Christiangramia forsetii (strain DSM 17595 / CGMCC 1.15422 / KT0803) (Gramella forsetii).